The chain runs to 457 residues: Chromosomal replication initiator protein DnaA (457 aa).

The domain I, interacts with DnaA modulators stretch occupies residues 1–90; it reads MDTNNNIEKE…HSVDVRIEVA (90 aa). The domain II stretch occupies residues 91 to 112; sequence PKIQINAQSNINYKAIKTSVKD. The segment at 113–323 is domain III, AAA+ region; it reads SYTFENFVVG…GAIIKISVNA (211 aa). Positions 153, 155, 156, and 157 each coordinate ATP. A domain IV, binds dsDNA region spans residues 324 to 457; that stretch reads NLMNASIDLN…DKKTAFNSSE (134 aa).

The protein belongs to the DnaA family. As to quaternary structure, oligomerizes as a right-handed, spiral filament on DNA at oriC. Interacts via domain I with HobA. In a crystal with domains I and II of DnaA HobA forms tetramers with DnaA fragments bound at the dimer interface of the tetramer.

Its subcellular location is the cytoplasm. The protein resides in the cell inner membrane. In terms of biological role, plays an essential role in the initiation and regulation of chromosomal replication. ATP-DnaA binds to the origin of replication (oriC) to initiate formation of the DNA replication initiation complex once per cell cycle. Binds the DnaA box (a 9 base pair repeat at the origin) and separates the double-stranded (ds)DNA. Forms a right-handed helical filament on oriC DNA; dsDNA binds to the exterior of the filament while single-stranded (ss)DNA is stabiized in the filament's interior. The ATP-DnaA-oriC complex binds and stabilizes one strand of the AT-rich DNA unwinding element (DUE), permitting loading of DNA polymerase. After initiation quickly degrades to an ADP-DnaA complex that is not apt for DNA replication. Binds acidic phospholipids. The DnaA box is 5'-TTATC[CA]A[CA]A-3' in this bacterium cycle. Multiple discrete DnaA-oriC complexes can be seen as DnaA levels increase. Binding of DnaA to oriC is increased by HobA; some chi-type structures can be seen by electron microscopy. Strand separation requires the DnaA boxes and adjacent DnaA-trio motifs but works equally well with ADP or ATP. In Helicobacter pylori (strain ATCC 700392 / 26695) (Campylobacter pylori), this protein is Chromosomal replication initiator protein DnaA.